The sequence spans 385 residues: Acetate kinase (385 aa).

Asn-9 contributes to the Mg(2+) binding site. ATP is bound at residue Lys-16. Arg-87 is a binding site for substrate. Catalysis depends on Asp-144, which acts as the Proton donor/acceptor. ATP contacts are provided by residues 202–206 and 277–279; these read HLGSG and DMR. Residue Glu-373 participates in Mg(2+) binding.

It belongs to the acetokinase family. In terms of assembly, homodimer. Mg(2+) serves as cofactor. Requires Mn(2+) as cofactor.

The protein localises to the cytoplasm. The catalysed reaction is acetate + ATP = acetyl phosphate + ADP. It functions in the pathway metabolic intermediate biosynthesis; acetyl-CoA biosynthesis; acetyl-CoA from acetate: step 1/2. Its function is as follows. Catalyzes the formation of acetyl phosphate from acetate and ATP. Can also catalyze the reverse reaction. In Rickettsia prowazekii (strain Madrid E), this protein is Acetate kinase.